The chain runs to 343 residues: Small ribosomal subunit biogenesis GTPase RsgA (343 aa).

The CP-type G domain occupies 116 to 275 (HGQLKPVAAN…LIDSPGIREF (160 aa)). GTP is bound by residues 163 to 166 (NKAD) and 217 to 225 (GQSGVGKSS). Residues Cys-299, Cys-304, His-306, and Cys-312 each contribute to the Zn(2+) site.

It belongs to the TRAFAC class YlqF/YawG GTPase family. RsgA subfamily. Monomer. Associates with 30S ribosomal subunit, binds 16S rRNA. Requires Zn(2+) as cofactor.

The protein localises to the cytoplasm. Its function is as follows. One of several proteins that assist in the late maturation steps of the functional core of the 30S ribosomal subunit. Helps release RbfA from mature subunits. May play a role in the assembly of ribosomal proteins into the subunit. Circularly permuted GTPase that catalyzes slow GTP hydrolysis, GTPase activity is stimulated by the 30S ribosomal subunit. This Pseudomonas putida (strain ATCC 700007 / DSM 6899 / JCM 31910 / BCRC 17059 / LMG 24140 / F1) protein is Small ribosomal subunit biogenesis GTPase RsgA.